We begin with the raw amino-acid sequence, 252 residues long: Cell division protein ZapD (252 aa).

The protein belongs to the ZapD family. In terms of assembly, interacts with FtsZ.

The protein resides in the cytoplasm. Cell division factor that enhances FtsZ-ring assembly. Directly interacts with FtsZ and promotes bundling of FtsZ protofilaments, with a reduction in FtsZ GTPase activity. The sequence is that of Cell division protein ZapD from Ralstonia nicotianae (strain ATCC BAA-1114 / GMI1000) (Ralstonia solanacearum).